The following is a 317-amino-acid chain: Putative ribosomal protein uL10-like (317 aa).

Y24 is subject to Phosphotyrosine. Phosphothreonine is present on T59. Residues 292-317 (AAAPAKVEAKEESEESDEDMGFGLFD) form a disordered region. K297 is covalently cross-linked (Glycyl lysine isopeptide (Lys-Gly) (interchain with G-Cter in SUMO1); alternate). A Glycyl lysine isopeptide (Lys-Gly) (interchain with G-Cter in SUMO2); alternate cross-link involves residue K297. A compositionally biased stretch (acidic residues) spans 302 to 311 (EESEESDEDM). S304 and S307 each carry phosphoserine.

This sequence belongs to the universal ribosomal protein uL10 family. As to quaternary structure, P0 forms a pentameric complex by interaction with dimers of P1 and P2.

Functionally, ribosomal protein P0 is the functional equivalent of E.coli protein L10. The protein is Putative ribosomal protein uL10-like (RPLP0P6) of Homo sapiens (Human).